Consider the following 99-residue polypeptide: Large ribosomal subunit protein bL21 (99 aa).

This sequence belongs to the bacterial ribosomal protein bL21 family. In terms of assembly, part of the 50S ribosomal subunit. Contacts protein L20.

Its function is as follows. This protein binds to 23S rRNA in the presence of protein L20. This chain is Large ribosomal subunit protein bL21, found in Anaplasma phagocytophilum (strain HZ).